A 155-amino-acid polypeptide reads, in one-letter code: Small ribosomal subunit protein uS7 (155 aa).

It belongs to the universal ribosomal protein uS7 family. As to quaternary structure, part of the 30S ribosomal subunit. Contacts proteins S9 and S11.

Functionally, one of the primary rRNA binding proteins, it binds directly to 16S rRNA where it nucleates assembly of the head domain of the 30S subunit. Is located at the subunit interface close to the decoding center, probably blocks exit of the E-site tRNA. In Mycoplasmoides gallisepticum (strain R(low / passage 15 / clone 2)) (Mycoplasma gallisepticum), this protein is Small ribosomal subunit protein uS7.